A 396-amino-acid chain; its full sequence is MAKKIVSDLDLKGKTVLVRADFNVPLKDGEITNDNRIVQALPTIQYIIEQGGKIVLFSHLGKVKEESDKAKLTLRPVAEDLSKKLDKEVVFVPETRGEKLEAAIKDLKEGDVLLVENTRYEDLDGKKESKNDPELGKYWASLGDVFVNDAFGTAHREHASNVGISTHLETAAGFLMDKEIKFIGGVVNDPHKPVVAILGGAKVSDKINVIKNLVNIADKIIIGGGMAYTFLKAQGKEIGISLLEEDKIDFAKDLLEKHGDKIVLPVDTKVAKEFSNDAKITVVPSDSIPADQEGMDIGPNTVKLFADELEGAHTVVWNGPMGVFEFSNFAQGTIGVCKAIANLKDAITIIGGGDSAAAAISLGFENDFTHISTGGGASLEYLEGKELPGIKAINNK.

Residues 21–23, R36, 59–62, R119, and R156 contribute to the substrate site; these read DFN and HLGK. Residues K206, G294, E325, and 352–355 each bind ATP; that span reads GGDS.

It belongs to the phosphoglycerate kinase family. As to quaternary structure, monomer.

It localises to the cytoplasm. It catalyses the reaction (2R)-3-phosphoglycerate + ATP = (2R)-3-phospho-glyceroyl phosphate + ADP. It participates in carbohydrate degradation; glycolysis; pyruvate from D-glyceraldehyde 3-phosphate: step 2/5. This is Phosphoglycerate kinase from Staphylococcus aureus (strain USA300).